Consider the following 877-residue polypeptide: Phosphoenolpyruvate carboxylase (877 aa).

Residues histidine 138 and lysine 543 contribute to the active site.

Belongs to the PEPCase type 1 family. It depends on Mg(2+) as a cofactor.

It catalyses the reaction oxaloacetate + phosphate = phosphoenolpyruvate + hydrogencarbonate. Forms oxaloacetate, a four-carbon dicarboxylic acid source for the tricarboxylic acid cycle. This chain is Phosphoenolpyruvate carboxylase, found in Aeromonas hydrophila subsp. hydrophila (strain ATCC 7966 / DSM 30187 / BCRC 13018 / CCUG 14551 / JCM 1027 / KCTC 2358 / NCIMB 9240 / NCTC 8049).